The primary structure comprises 232 residues: RNA chaperone ProQ (232 aa).

The disordered stretch occupies residues 105 to 182 (EAKARVQAQR…REEQHTPVSD (78 aa)). Residues 117-136 (QQAKKREAAAAAGEKEDAPR) are compositionally biased toward basic and acidic residues. Over residues 137 to 146 (RERKPRPTTP) the composition is skewed to basic residues. Basic and acidic residues predominate over residues 147–177 (RRKEGAERKPRAQKPVEKAPKTAKAPREEQH).

It belongs to the ProQ family.

It localises to the cytoplasm. Its function is as follows. RNA chaperone with significant RNA binding, RNA strand exchange and RNA duplexing activities. May regulate ProP activity through an RNA-based, post-transcriptional mechanism. The protein is RNA chaperone ProQ of Shigella dysenteriae serotype 1 (strain Sd197).